Reading from the N-terminus, the 79-residue chain is Putative membrane protein insertion efficiency factor (79 aa).

Belongs to the UPF0161 family.

It localises to the cell inner membrane. In terms of biological role, could be involved in insertion of integral membrane proteins into the membrane. The chain is Putative membrane protein insertion efficiency factor from Bacteroides thetaiotaomicron (strain ATCC 29148 / DSM 2079 / JCM 5827 / CCUG 10774 / NCTC 10582 / VPI-5482 / E50).